Here is a 308-residue protein sequence, read N- to C-terminus: Flavonol synthase 3 (308 aa).

The region spanning 167-267 (TIEYLMKINY…RISWPVFVES (101 aa)) is the Fe2OG dioxygenase domain. Position 175 to 177 (175 to 177 (NYY)) interacts with 2-oxoglutarate. The Fe cation site is built by His192, Asp194, and His248. 258–260 (RIS) is a binding site for 2-oxoglutarate.

It belongs to the iron/ascorbate-dependent oxidoreductase family. The cofactor is Fe(2+). In terms of tissue distribution, widely expressed at low levels.

It catalyses the reaction a (2R,3R)-dihydroflavonol + 2-oxoglutarate + O2 = a flavonol + succinate + CO2 + H2O. Its pathway is secondary metabolite biosynthesis; flavonoid biosynthesis. Functionally, catalyzes the formation of flavonols from dihydroflavonols. Possesses low activity in vitro towards dihydrokaempferol and dihydroquercetin producing kaempferol and quercitin, respectively. The protein is Flavonol synthase 3 of Arabidopsis thaliana (Mouse-ear cress).